The sequence spans 339 residues: BTB/POZ domain-containing protein KCTD9 (339 aa).

The 80-residue stretch at 3–82 (RVTLFLNGSP…PQTDARPPGG (80 aa)) folds into the KHA domain. S11 is subject to Phosphoserine. Residues 89-161 (DWLTLNVGGR…LRHGQLIVND (73 aa)) enclose the BTB domain. Pentapeptide repeat domains lie at 223–247 (ANLQGVKMLCSNAEGASLRLCNFED), 253–292 (ANLEGANLKGVDMEGSQMTGINLRVATLKNAKLKNCNLRG), and 293–327 (ATLAGTDLENCDLSGCDLQEANLRGSNVKGAIFEE).

As to quaternary structure, forms pentamers. Component of a complex mades of five KCTD9 and five CUL3 subunits.

It functions in the pathway protein modification; protein ubiquitination. Substrate-specific adapter of a BCR (BTB-CUL3-RBX1) E3 ubiquitin-protein ligase complex, which mediates the ubiquitination of target proteins, leading to their degradation by the proteasome. The sequence is that of BTB/POZ domain-containing protein KCTD9 (Kctd9) from Mus musculus (Mouse).